The sequence spans 211 residues: tRNA (guanine-N(7)-)-methyltransferase (211 aa).

Residues Glu44, Asp69, Asp96, and Asp118 each coordinate S-adenosyl-L-methionine. Asp118 is an active-site residue. Lys122 provides a ligand contact to substrate. The interval Arg124–Arg129 is interaction with RNA. Substrate-binding positions include Asp154 and Thr191 to Glu194.

It belongs to the class I-like SAM-binding methyltransferase superfamily. TrmB family.

The catalysed reaction is guanosine(46) in tRNA + S-adenosyl-L-methionine = N(7)-methylguanosine(46) in tRNA + S-adenosyl-L-homocysteine. It functions in the pathway tRNA modification; N(7)-methylguanine-tRNA biosynthesis. Catalyzes the formation of N(7)-methylguanine at position 46 (m7G46) in tRNA. This chain is tRNA (guanine-N(7)-)-methyltransferase, found in Streptococcus equi subsp. zooepidemicus (strain H70).